A 347-amino-acid polypeptide reads, in one-letter code: N-acetyl-gamma-glutamyl-phosphate reductase (347 aa).

The active site involves Cys-152.

It belongs to the NAGSA dehydrogenase family. Type 1 subfamily.

It is found in the cytoplasm. The catalysed reaction is N-acetyl-L-glutamate 5-semialdehyde + phosphate + NADP(+) = N-acetyl-L-glutamyl 5-phosphate + NADPH + H(+). It functions in the pathway amino-acid biosynthesis; L-arginine biosynthesis; N(2)-acetyl-L-ornithine from L-glutamate: step 3/4. Catalyzes the NADPH-dependent reduction of N-acetyl-5-glutamyl phosphate to yield N-acetyl-L-glutamate 5-semialdehyde. In Neisseria gonorrhoeae (strain NCCP11945), this protein is N-acetyl-gamma-glutamyl-phosphate reductase.